The following is a 367-amino-acid chain: UDP-N-acetylglucosamine--N-acetylmuramyl-(pentapeptide) pyrophosphoryl-undecaprenol N-acetylglucosamine transferase (367 aa).

UDP-N-acetyl-alpha-D-glucosamine contacts are provided by residues 13–15 (TGG), Asn125, Arg165, Ser192, and Gln293.

Belongs to the glycosyltransferase 28 family. MurG subfamily.

It is found in the cell inner membrane. It carries out the reaction di-trans,octa-cis-undecaprenyl diphospho-N-acetyl-alpha-D-muramoyl-L-alanyl-D-glutamyl-meso-2,6-diaminopimeloyl-D-alanyl-D-alanine + UDP-N-acetyl-alpha-D-glucosamine = di-trans,octa-cis-undecaprenyl diphospho-[N-acetyl-alpha-D-glucosaminyl-(1-&gt;4)]-N-acetyl-alpha-D-muramoyl-L-alanyl-D-glutamyl-meso-2,6-diaminopimeloyl-D-alanyl-D-alanine + UDP + H(+). It functions in the pathway cell wall biogenesis; peptidoglycan biosynthesis. Functionally, cell wall formation. Catalyzes the transfer of a GlcNAc subunit on undecaprenyl-pyrophosphoryl-MurNAc-pentapeptide (lipid intermediate I) to form undecaprenyl-pyrophosphoryl-MurNAc-(pentapeptide)GlcNAc (lipid intermediate II). The sequence is that of UDP-N-acetylglucosamine--N-acetylmuramyl-(pentapeptide) pyrophosphoryl-undecaprenol N-acetylglucosamine transferase from Jannaschia sp. (strain CCS1).